Reading from the N-terminus, the 457-residue chain is tRNA(Ile)-lysidine synthase (457 aa).

27-32 is a binding site for ATP; the sequence is SGGLDS.

Belongs to the tRNA(Ile)-lysidine synthase family.

The protein resides in the cytoplasm. It catalyses the reaction cytidine(34) in tRNA(Ile2) + L-lysine + ATP = lysidine(34) in tRNA(Ile2) + AMP + diphosphate + H(+). In terms of biological role, ligates lysine onto the cytidine present at position 34 of the AUA codon-specific tRNA(Ile) that contains the anticodon CAU, in an ATP-dependent manner. Cytidine is converted to lysidine, thus changing the amino acid specificity of the tRNA from methionine to isoleucine. The chain is tRNA(Ile)-lysidine synthase from Hamiltonella defensa subsp. Acyrthosiphon pisum (strain 5AT).